The sequence spans 305 residues: Tyrosine recombinase XerC (305 aa).

A Core-binding (CB) domain is found at 4 to 95; the sequence is TSIQELIDKW…AVKNFYRFLE (92 aa). One can recognise a Tyr recombinase domain in the interval 116–298; that stretch reads LLPKALSEDD…SIKHLEAVYT (183 aa). Catalysis depends on residues Arg159, Lys182, His250, Arg253, and His276. Residue Tyr285 is the O-(3'-phospho-DNA)-tyrosine intermediate of the active site.

It belongs to the 'phage' integrase family. XerC subfamily. Forms a cyclic heterotetrameric complex composed of two molecules of XerC and two molecules of XerD.

The protein localises to the cytoplasm. In terms of biological role, site-specific tyrosine recombinase, which acts by catalyzing the cutting and rejoining of the recombining DNA molecules. The XerC-XerD complex is essential to convert dimers of the bacterial chromosome into monomers to permit their segregation at cell division. It also contributes to the segregational stability of plasmids. This Rickettsia felis (strain ATCC VR-1525 / URRWXCal2) (Rickettsia azadi) protein is Tyrosine recombinase XerC.